The following is a 393-amino-acid chain: Elongation factor Tu (393 aa).

The tr-type G domain occupies 10–203 (KPHVNIGTIG…AVDNYIPEPV (194 aa)). The segment at 19–26 (GHVDHGKT) is G1. 19–26 (GHVDHGKT) contributes to the GTP binding site. Mg(2+) is bound at residue T26. The interval 60 to 64 (GITIS) is G2. Residues 81–84 (DCPG) are G3. Residues 81–85 (DCPGH) and 136–139 (NKVD) contribute to the GTP site. Residues 136-139 (NKVD) form a G4 region. Positions 173 to 175 (SAL) are G5.

It belongs to the TRAFAC class translation factor GTPase superfamily. Classic translation factor GTPase family. EF-Tu/EF-1A subfamily. As to quaternary structure, monomer.

The protein localises to the cytoplasm. It carries out the reaction GTP + H2O = GDP + phosphate + H(+). Its function is as follows. GTP hydrolase that promotes the GTP-dependent binding of aminoacyl-tRNA to the A-site of ribosomes during protein biosynthesis. The chain is Elongation factor Tu from Chlorobium phaeovibrioides (strain DSM 265 / 1930) (Prosthecochloris vibrioformis (strain DSM 265)).